We begin with the raw amino-acid sequence, 465 residues long: Opioid growth factor receptor-like protein 1 (465 aa).

Disordered regions lie at residues 1 to 89 (MGNL…GNAK) and 309 to 465 (ENFI…TSSG). Basic and acidic residues-rich tracts occupy residues 48-59 (REQPEQPPERAG), 316-325 (PKKEQPERSK), 363-396 (TVEE…RNSE), and 426-440 (SEKD…KDSE). A compositionally biased stretch (polar residues) spans 442 to 465 (PENTSCHAEVVSQQNVTNPQTSSG).

This sequence belongs to the opioid growth factor receptor family.

This is Opioid growth factor receptor-like protein 1 (Ogfrl1) from Rattus norvegicus (Rat).